A 621-amino-acid chain; its full sequence is Protein Tra (621 aa).

Residues 126–146 form a helical membrane-spanning segment; that stretch reads GAWPVAGSLALIAANVAALVI. The region spanning 275 to 465 is the FtsK domain; sequence GEPVQVPLGR…LALSTSGESR (191 aa). 290–297 contacts ATP; the sequence is GTSGSGKS. The helical transmembrane segment at 564–584 threads the bilayer; it reads VAAAIGTGATTVADVATVTGI.

The protein resides in the cell membrane. Its function is as follows. Major protein required for plasmid transfer. The polypeptide is Protein Tra (tra) (Streptomyces lividans).